We begin with the raw amino-acid sequence, 484 residues long: Chromosomal replication initiator protein DnaA (484 aa).

The tract at residues 1–83 is domain I, interacts with DnaA modulators; that stretch reads MQPPSQDWAS…LAWRTVWPGI (83 aa). The segment at 83–146 is domain II; that stretch reads IAEVKVSVRN…EKKAEGEDQN (64 aa). The tract at residues 110-146 is disordered; the sequence is GDQPRPLPKKPAKKKQSVPATPKSTSPEKKAEGEDQN. The span at 116 to 125 shows a compositional bias: basic residues; the sequence is LPKKPAKKKQ. Positions 135–146 are enriched in basic and acidic residues; it reads SPEKKAEGEDQN. Residues 147-364 form a domain III, AAA+ region region; sequence QFEERYNFDN…GALNRVVAYA (218 aa). 4 residues coordinate ATP: glycine 191, glycine 193, lysine 194, and threonine 195. The interval 365 to 484 is domain IV, binds dsDNA; sequence TLSNRPINMD…VRLLMRQFEG (120 aa).

The protein belongs to the DnaA family. Oligomerizes as a right-handed, spiral filament on DNA at oriC.

It is found in the cytoplasm. In terms of biological role, plays an essential role in the initiation and regulation of chromosomal replication. ATP-DnaA binds to the origin of replication (oriC) to initiate formation of the DNA replication initiation complex once per cell cycle. Binds the DnaA box (a 9 base pair repeat at the origin) and separates the double-stranded (ds)DNA. Forms a right-handed helical filament on oriC DNA; dsDNA binds to the exterior of the filament while single-stranded (ss)DNA is stabiized in the filament's interior. The ATP-DnaA-oriC complex binds and stabilizes one strand of the AT-rich DNA unwinding element (DUE), permitting loading of DNA polymerase. After initiation quickly degrades to an ADP-DnaA complex that is not apt for DNA replication. Binds acidic phospholipids. The sequence is that of Chromosomal replication initiator protein DnaA from Zymomonas mobilis subsp. mobilis (strain ATCC 31821 / ZM4 / CP4).